We begin with the raw amino-acid sequence, 116 residues long: Tyrosine-protein phosphatase 20 (116 aa).

The Tyrosine-protein phosphatase domain maps to 1–116 (WMMIVEQKCR…EIGGDAPMVV (116 aa)). Asp84 lines the substrate pocket.

Belongs to the protein-tyrosine phosphatase family.

It catalyses the reaction O-phospho-L-tyrosyl-[protein] + H2O = L-tyrosyl-[protein] + phosphate. In Styela plicata (Wrinkled sea squirt), this protein is Tyrosine-protein phosphatase 20 (STY-20).